The primary structure comprises 416 residues: Na(+)/H(+) antiporter NhaA (416 aa).

The next 9 membrane-spanning stretches (helical) occupy residues 18–38 (VGGA…NSPW), 59–79 (LTLA…VAGL), 97–117 (ALPI…AAVI), 127–147 (GWAI…ALTG), 167–187 (LLAI…LWLL), 265–285 (GICV…ATVF), 297–317 (VMLG…WVAI), 333–353 (MFAL…VAEL), and 363–383 (LAKA…SALL). The interval 396-416 (ALELQPDEGDASDPSEGGSLR) is disordered.

It belongs to the NhaA Na(+)/H(+) (TC 2.A.33) antiporter family.

It localises to the cell membrane. The catalysed reaction is Na(+)(in) + 2 H(+)(out) = Na(+)(out) + 2 H(+)(in). Na(+)/H(+) antiporter that extrudes sodium in exchange for external protons. This Nocardia farcinica (strain IFM 10152) protein is Na(+)/H(+) antiporter NhaA.